The primary structure comprises 301 residues: Probable alpha-L-glutamate ligase 1 (301 aa).

The ATP-grasp domain maps to 104 to 287; sequence LQLLSRKNIG…VAEKIIQFIE (184 aa). ATP is bound by residues Lys141, 178–179, Asp187, and 211–213; these read EY and RSN. Residues Asp248, Glu260, and Asn262 each coordinate Mg(2+). Residues Asp248, Glu260, and Asn262 each contribute to the Mn(2+) site.

This sequence belongs to the RimK family. It depends on Mg(2+) as a cofactor. Mn(2+) serves as cofactor.

The protein is Probable alpha-L-glutamate ligase 1 of Shewanella frigidimarina (strain NCIMB 400).